The primary structure comprises 822 residues: Anaphase-promoting complex subunit 2 (822 aa).

Phosphoserine occurs at positions 218, 314, 470, 534, and 697. The disordered stretch occupies residues Gly450–Lys495. The segment covering Gln468–Val481 has biased composition (acidic residues). The cullin homology stretch occupies residues Ile502–Leu700. Tyr810 is modified (phosphotyrosine).

It belongs to the cullin family. The mammalian APC/C is composed at least of 14 distinct subunits ANAPC1, ANAPC2, CDC27/APC3, ANAPC4, ANAPC5, CDC16/APC6, ANAPC7, CDC23/APC8, ANAPC10, ANAPC11, CDC26/APC12, ANAPC13, ANAPC15 and ANAPC16 that assemble into a complex of at least 19 chains with a combined molecular mass of around 1.2 MDa; APC/C interacts with FZR1 and FBXO5. In the context of the APC/C complex, directly interacts with UBE2C and UBE2S. Interacts (via cullin domain) with ANAPC11 and with UBCH10. Interacts with NEUROD2. Interacts with FBXO43; the interaction is direct.

It functions in the pathway protein modification; protein ubiquitination. Functionally, together with the RING-H2 protein ANAPC11, constitutes the catalytic component of the anaphase promoting complex/cyclosome (APC/C), a cell cycle-regulated E3 ubiquitin ligase that controls progression through mitosis and the G1 phase of the cell cycle. The APC/C complex acts by mediating ubiquitination and subsequent degradation of target proteins: it mainly mediates the formation of 'Lys-11'-linked polyubiquitin chains and, to a lower extent, the formation of 'Lys-48'- and 'Lys-63'-linked polyubiquitin chains. The APC/C complex catalyzes assembly of branched 'Lys-11'-/'Lys-48'-linked branched ubiquitin chains on target proteins. The CDC20-APC/C complex positively regulates the formation of synaptic vesicle clustering at active zone to the presynaptic membrane in postmitotic neurons. CDC20-APC/C-induced degradation of NEUROD2 drives presynaptic differentiation. This chain is Anaphase-promoting complex subunit 2 (ANAPC2), found in Homo sapiens (Human).